The chain runs to 429 residues: UDP-N-acetylglucosamine 1-carboxyvinyltransferase (429 aa).

22–23 (KN) serves as a coordination point for phosphoenolpyruvate. Arg93 is a UDP-N-acetyl-alpha-D-glucosamine binding site. The Proton donor role is filled by Cys117. Cys117 is subject to 2-(S-cysteinyl)pyruvic acid O-phosphothioketal. UDP-N-acetyl-alpha-D-glucosamine is bound by residues 122–126 (RPVDQ), Asp313, and Ile335.

Belongs to the EPSP synthase family. MurA subfamily.

It localises to the cytoplasm. The catalysed reaction is phosphoenolpyruvate + UDP-N-acetyl-alpha-D-glucosamine = UDP-N-acetyl-3-O-(1-carboxyvinyl)-alpha-D-glucosamine + phosphate. The protein operates within cell wall biogenesis; peptidoglycan biosynthesis. Cell wall formation. Adds enolpyruvyl to UDP-N-acetylglucosamine. The chain is UDP-N-acetylglucosamine 1-carboxyvinyltransferase from Variovorax paradoxus (strain S110).